Here is a 343-residue protein sequence, read N- to C-terminus: Holliday junction branch migration complex subunit RuvB (343 aa).

Positions 4–193 are large ATPase domain (RuvB-L); the sequence is TDNLTAAQPQ…FGIVSRLEFY (190 aa). Residues L32, R33, G74, K77, T78, T79, 140–142, R183, Y193, and R230 contribute to the ATP site; that span reads EDY. T78 contributes to the Mg(2+) binding site. The interval 194–264 is small ATPAse domain (RuvB-S); that stretch reads ENRDLTTIVS…IADAALSMLD (71 aa). The tract at residues 267 to 343 is head domain (RuvB-H); it reads AQGLDVMDRK…YLHFGLPVEK (77 aa). Residues R322 and R327 each contribute to the DNA site.

It belongs to the RuvB family. In terms of assembly, homohexamer. Forms an RuvA(8)-RuvB(12)-Holliday junction (HJ) complex. HJ DNA is sandwiched between 2 RuvA tetramers; dsDNA enters through RuvA and exits via RuvB. An RuvB hexamer assembles on each DNA strand where it exits the tetramer. Each RuvB hexamer is contacted by two RuvA subunits (via domain III) on 2 adjacent RuvB subunits; this complex drives branch migration. In the full resolvosome a probable DNA-RuvA(4)-RuvB(12)-RuvC(2) complex forms which resolves the HJ.

It localises to the cytoplasm. It carries out the reaction ATP + H2O = ADP + phosphate + H(+). The RuvA-RuvB-RuvC complex processes Holliday junction (HJ) DNA during genetic recombination and DNA repair, while the RuvA-RuvB complex plays an important role in the rescue of blocked DNA replication forks via replication fork reversal (RFR). RuvA specifically binds to HJ cruciform DNA, conferring on it an open structure. The RuvB hexamer acts as an ATP-dependent pump, pulling dsDNA into and through the RuvAB complex. RuvB forms 2 homohexamers on either side of HJ DNA bound by 1 or 2 RuvA tetramers; 4 subunits per hexamer contact DNA at a time. Coordinated motions by a converter formed by DNA-disengaged RuvB subunits stimulates ATP hydrolysis and nucleotide exchange. Immobilization of the converter enables RuvB to convert the ATP-contained energy into a lever motion, pulling 2 nucleotides of DNA out of the RuvA tetramer per ATP hydrolyzed, thus driving DNA branch migration. The RuvB motors rotate together with the DNA substrate, which together with the progressing nucleotide cycle form the mechanistic basis for DNA recombination by continuous HJ branch migration. Branch migration allows RuvC to scan DNA until it finds its consensus sequence, where it cleaves and resolves cruciform DNA. This chain is Holliday junction branch migration complex subunit RuvB, found in Neisseria meningitidis serogroup C (strain 053442).